A 497-amino-acid polypeptide reads, in one-letter code: Probable cytosol aminopeptidase (497 aa).

K263 and D268 together coordinate Mn(2+). The active site involves K275. Residues D286, D345, and E347 each coordinate Mn(2+). The active site involves R349.

Belongs to the peptidase M17 family. Mn(2+) serves as cofactor.

The protein resides in the cytoplasm. It catalyses the reaction Release of an N-terminal amino acid, Xaa-|-Yaa-, in which Xaa is preferably Leu, but may be other amino acids including Pro although not Arg or Lys, and Yaa may be Pro. Amino acid amides and methyl esters are also readily hydrolyzed, but rates on arylamides are exceedingly low.. The catalysed reaction is Release of an N-terminal amino acid, preferentially leucine, but not glutamic or aspartic acids.. Its function is as follows. Presumably involved in the processing and regular turnover of intracellular proteins. Catalyzes the removal of unsubstituted N-terminal amino acids from various peptides. This chain is Probable cytosol aminopeptidase, found in Sinorhizobium medicae (strain WSM419) (Ensifer medicae).